A 717-amino-acid chain; its full sequence is Adhesion cell surface protein MAD1 (717 aa).

Residues 1-19 (MKSALSVVVAAAGVQQASA) form the signal peptide. Low complexity-rich tracts occupy residues 237–254 (TPVTTLQTYTTPSQQTTT) and 262–274 (SKETTTSAQQTTP). Disordered regions lie at residues 237–392 (TPVT…ATTT) and 451–506 (RTQS…TPPC). 8 tandem repeats follow at residues 275–286 (GKETTPAQQTTP), 287–298 (SKETTPVQQTTS), 299–310 (GKETTPAQQTTP), 311–328 (GKETTSSQETTSAHQTTP), 329–340 (GKETTPAQQTTP), 341–352 (GKETTPAQQTTP), 353–364 (GKETTPAQQTTP), and 365–376 (GKETTPAQQTTP). Over residues 275–366 (GKETTPAQQT…TPAQQTTPGK (92 aa)) the composition is skewed to polar residues. 2 stretches are compositionally biased toward low complexity: residues 368-392 (TTPAQQTTPGQQTTPSQPTTAATTT) and 484-503 (QPTGEKPNPVTSQPPQSTQT). The CFEM domain maps to 481–595 (TPEQPTGEKP…TQIITVTGTP (115 aa)). 3 disulfide bridges follow: Cys513–Cys546, Cys524–Cys532, and Cys534–Cys568. Asp529 contributes to the heme binding site. Asn614 carries N-linked (GlcNAc...) asparagine glycosylation. The interval 632–690 (PTPTGGVPNQPPATASVPAGQNPPPVTGQNPPPAVTDQSPPPAITTGTGGVIPPKPTGS) is disordered. A compositionally biased stretch (pro residues) spans 652–674 (QNPPPVTGQNPPPAVTDQSPPPA). Ala695 is lipidated: GPI-anchor amidated alanine. Positions 696–717 (GSGRVGAGLGMVLAVAAFVAAL) are cleaved as a propeptide — removed in mature form.

This sequence belongs to the RBT5 family. Post-translationally, the GPI-anchor is attached to the protein in the endoplasmic reticulum and serves to target the protein to the cell surface. There, the glucosamine-inositol phospholipid moiety is cleaved off and the GPI-modified mannoprotein is covalently attached via its lipidless GPI glycan remnant to the 1,6-beta-glucan of the outer cell wall layer.

It is found in the secreted. The protein localises to the cell wall. Its subcellular location is the cell membrane. Its function is as follows. Cell surface adhesion protein that plays a key role in virulence by allowing adherence to the insect host surface. Required to orientate the cytoskeleton and stimulate the expression of genes involved in the cell cycle. Is also involved in achieving the septin hourglass shape and subsequent separation of cells. This is Adhesion cell surface protein MAD1 from Metarhizium anisopliae (Entomophthora anisopliae).